The chain runs to 365 residues: Protein RecA (365 aa).

73–80 lines the ATP pocket; sequence GPESSGKT.

The protein belongs to the RecA family.

It localises to the cytoplasm. Can catalyze the hydrolysis of ATP in the presence of single-stranded DNA, the ATP-dependent uptake of single-stranded DNA by duplex DNA, and the ATP-dependent hybridization of homologous single-stranded DNAs. It interacts with LexA causing its activation and leading to its autocatalytic cleavage. The protein is Protein RecA of Prochlorococcus marinus (strain MIT 9312).